Here is a 251-residue protein sequence, read N- to C-terminus: 4-hydroxy-tetrahydrodipicolinate reductase (251 aa).

8–13 serves as a coordination point for NAD(+); the sequence is GALGRM. Arg36 is a binding site for NADP(+). NAD(+) is bound by residues 89 to 91 and 113 to 116; these read GTT and TTNF. His145 acts as the Proton donor/acceptor in catalysis. His146 lines the (S)-2,3,4,5-tetrahydrodipicolinate pocket. The Proton donor role is filled by Lys149. (S)-2,3,4,5-tetrahydrodipicolinate is bound at residue 155-156; that stretch reads GT.

It belongs to the DapB family.

It localises to the cytoplasm. The enzyme catalyses (S)-2,3,4,5-tetrahydrodipicolinate + NAD(+) + H2O = (2S,4S)-4-hydroxy-2,3,4,5-tetrahydrodipicolinate + NADH + H(+). The catalysed reaction is (S)-2,3,4,5-tetrahydrodipicolinate + NADP(+) + H2O = (2S,4S)-4-hydroxy-2,3,4,5-tetrahydrodipicolinate + NADPH + H(+). Its pathway is amino-acid biosynthesis; L-lysine biosynthesis via DAP pathway; (S)-tetrahydrodipicolinate from L-aspartate: step 4/4. Its function is as follows. Catalyzes the conversion of 4-hydroxy-tetrahydrodipicolinate (HTPA) to tetrahydrodipicolinate. The sequence is that of 4-hydroxy-tetrahydrodipicolinate reductase from Methanocorpusculum labreanum (strain ATCC 43576 / DSM 4855 / Z).